A 452-amino-acid chain; its full sequence is Deoxybrevianamide E synthase notF (452 aa).

The segment covering 1-19 has biased composition (basic and acidic residues); sequence MTAPELRVDTFRAPEDAPK. The interval 1–38 is disordered; the sequence is MTAPELRVDTFRAPEDAPKEPSAQQPRLPSSPSPAQAL. Low complexity predominate over residues 21-38; that stretch reads PSAQQPRLPSSPSPAQAL. Glutamate 108 serves as a coordination point for brevianamide F. Residues arginine 122, lysine 212, tyrosine 214, lysine 282, tyrosine 284, tyrosine 371, tyrosine 436, and tyrosine 440 each contribute to the dimethylallyl diphosphate site.

This sequence belongs to the tryptophan dimethylallyltransferase family. In terms of assembly, monomer.

The enzyme catalyses brevianamide F + dimethylallyl diphosphate = deoxybrevianamide E + diphosphate. Its pathway is alkaloid biosynthesis. Addition of 5 mM Mg(2+), Ca(2+) or Mn(2+) slightly enhances catalysis (about 100-120%). Significant reduction of enzyme activity (2%-35%) is observed with Cu(2+), Zn(2+), Fe(2+), or Sn(2+) (5 mM). Its function is as follows. Deoxybrevianamide E synthase; part of the gene cluster that mediates the biosynthesis of notoamide, a fungal indole alkaloid that belongs to a family of natural products containing a characteristic bicyclo[2.2.2]diazaoctane core. The first step of notoamide biosynthesis involves coupling of L-proline and L-tryptophan by the bimodular NRPS notE, to produce cyclo-L-tryptophan-L-proline called brevianamide F. The reverse prenyltransferase notF then acts as a deoxybrevianamide E synthase and converts brevianamide F to deoxybrevianamide E via reverse prenylation at C-2 of the indole ring leading to the bicyclo[2.2.2]diazaoctane core. Deoxybrevianamide E is further hydroxylated at C-6 of the indole ring, likely catalyzed by the cytochrome P450 monooxygenase notG, to yield 6-hydroxy-deoxybrevianamide E. 6-hydroxy-deoxybrevianamide E is a specific substrate of the prenyltransferase notC for normal prenylation at C-7 to produce 6-hydroxy-7-prenyl-deoxybrevianamide, also called notoamide S. As the proposed pivotal branching point in notoamide biosynthesis, notoamide S can be diverted to notoamide E through an oxidative pyran ring closure putatively catalyzed by either notH cytochrome P450 monooxygenase or the notD FAD-linked oxidoreductase. This step would be followed by an indole 2,3-epoxidation-initiated pinacol-like rearrangement catalyzed by the notB FAD-dependent monooxygenase leading to the formation of notoamide C and notoamide D. On the other hand notoamide S is converted to notoamide T by notH (or notD), a bifunctional oxidase that also functions as the intramolecular Diels-Alderase responsible for generation of (+)-notoamide T. To generate antipodal (-)-notoaminide T, notH' (or notD') in Aspergillus versicolor is expected to catalyze a Diels-Alder reaction leading to the opposite stereochemistry. The remaining oxidoreductase notD (or notH) likely catalyzes the oxidative pyran ring formation to yield (+)-stephacidin A. The FAD-dependent monooxygenase notI is highly similar to notB and is predicted to catalyze a similar conversion from (+)-stephacidin A to (-)-notoamide B via the 2,3-epoxidation of (+)-stephacidin A followed by a pinacol-type rearrangement. Finally, it remains unclear which enzyme could be responsible for the final hydroxylation steps leading to notoamide A and sclerotiamide. This is Deoxybrevianamide E synthase notF from Aspergillus sp. (strain MF297-2).